The following is a 398-amino-acid chain: Pheromone receptor transcription activator (398 aa).

Disordered regions lie at residues 1–30 (MMDERKLSNFQIDGEKAYTGSSQGNSYLED), 101–125 (TDQNESQASQAKQSSAQLSDSESGY), and 254–317 (PSTG…DRPP). Positions 20–74 (GSSQGNSYLEDRQKRQNTFTKRKAGIFKKANELALLTGSEVMVLVVSETGLVHTF) constitute an MADS-box domain. The span at 106-121 (SQASQAKQSSAQLSDS) shows a compositional bias: low complexity. 2 stretches are compositionally biased toward polar residues: residues 262 to 273 (TTGQHSVNSPPS) and 282 to 294 (NKSFATRSEPQTP).

The protein resides in the nucleus. Functionally, in response to mating-pheromone signaling or nitrogen starvation, it interacts with mat1-Pc. This activates the expression of one of two mating-type-specific genes sxa2 or map3, which leads to inactivation of the P-factor. May also interact with mat1-Mc. The protein is Pheromone receptor transcription activator (map1) of Schizosaccharomyces pombe (strain 972 / ATCC 24843) (Fission yeast).